The sequence spans 378 residues: Histidine decarboxylase (378 aa).

Histidine 120 is a binding site for substrate. N6-(pyridoxal phosphate)lysine is present on lysine 233.

The protein belongs to the group II decarboxylase family. In terms of assembly, homotetramer. Requires pyridoxal 5'-phosphate as cofactor.

The catalysed reaction is L-histidine + H(+) = histamine + CO2. The chain is Histidine decarboxylase (hdc) from Klebsiella aerogenes (Enterobacter aerogenes).